The following is a 61-amino-acid chain: Chi-conotoxin MrIA (61 aa).

Positions 1–19 are cleaved as a signal peptide; that stretch reads MRCLPVLIILLLLTASAPG. Residues 20 to 48 constitute a propeptide that is removed on maturation; the sequence is VVVLPKTEDDVPMSSVYGNGKSILRGILR. 2 cysteine pairs are disulfide-bonded: cysteine 52–cysteine 61 and cysteine 53–cysteine 58. Proline 60 is subject to 4-hydroxyproline.

This sequence belongs to the conotoxin T superfamily. Expressed by the venom duct.

The protein localises to the secreted. Its function is as follows. Chi-conotoxins inhibit the neuronal noradrenaline transporter (NET/SLC6A2). Activity has been described on both human (inhibition of norepinephrine uptake is IC(50)=1.26 uM) and rat (pIC(50)=6.21 corresponding IC(50)=0.16 uM) transporters. Acts as a reversible non-competitive inhibitor. The chain is Chi-conotoxin MrIA from Conus marmoreus (Marble cone).